The chain runs to 282 residues: Phospholipid phosphatase 1 (282 aa).

Topologically, residues 1–6 (MFDKPR) are cytoplasmic. The PDZ-binding; involved in localization to the apical cell membrane motif lies at 5-7 (PRL). Residues 7-27 (LPYVVLDVICVLLAGLPFIIL) form a helical membrane-spanning segment. The Extracellular segment spans residues 28-53 (TSRHTPFQRGVFCTDESIKYPYREDT). The helical transmembrane segment at 54 to 74 (IPYALLGGIVIPFCIIVMITG) threads the bilayer. Over 75-88 (ETLSVYFNVLHSNS) the chain is Cytoplasmic. The helical transmembrane segment at 89–109 (FVSNHYIATIYKAVGAFLFGA) threads the bilayer. At 110–164 (SASQSLTDIAKYSIGRLRPHFLAVCNPDWSKINCSDGYIENFVCQGNEQKVREGR) the chain is on the extracellular side. The interval 120-128 (KYSIGRLRP) is phosphatase sequence motif I. An N-linked (GlcNAc...) asparagine glycan is attached at asparagine 142. A helical transmembrane segment spans residues 165-185 (LSFYSGHSSFSMYCMLFVALY). The interval 168–171 (YSGH) is phosphatase sequence motif II. Histidine 171 (proton donors) is an active-site residue. The Cytoplasmic segment spans residues 186–194 (LQARMKGDW). The chain crosses the membrane as a helical span at residues 195–215 (ARLLRPMLQFGLVALSIYVGL). The segment at 216–227 (SRVSDYKHHWSD) is phosphatase sequence motif III. Residues 216 to 229 (SRVSDYKHHWSDVL) are Extracellular-facing. The active-site Nucleophile is histidine 223. A helical membrane pass occupies residues 230–250 (IGLIQGAVVAILVVLYVTDFF). Residues 251–282 (KTTESNKERKEDSHTTLHETTNRQSYARNHEP) lie on the Cytoplasmic side of the membrane. The span at 257 to 271 (KERKEDSHTTLHETT) shows a compositional bias: basic and acidic residues. Residues 257 to 282 (KERKEDSHTTLHETTNRQSYARNHEP) are disordered. Over residues 272–282 (NRQSYARNHEP) the composition is skewed to polar residues.

It belongs to the PA-phosphatase related phosphoesterase family. Forms functional homodimers and homooligomers that are not required for substrate recognition and catalytic activity. Can also form heterooligomers with PLPP2 and PLPP3. Post-translationally, N-glycosylated. N-linked sugars are of the complex type. N-glycosylation is not required for the phosphatase activity.

It localises to the cell membrane. The protein localises to the apical cell membrane. The protein resides in the membrane raft. Its subcellular location is the membrane. It is found in the caveola. It catalyses the reaction a 1,2-diacyl-sn-glycero-3-phosphate + H2O = a 1,2-diacyl-sn-glycerol + phosphate. The catalysed reaction is 1,2-dihexadecanoyl-sn-glycero-3-phosphate + H2O = 1,2-dihexadecanoyl-sn-glycerol + phosphate. The enzyme catalyses 1,2-di-(9Z-octadecenoyl)-sn-glycero-3-phosphate + H2O = 1,2-di-(9Z-octadecenoyl)-sn-glycerol + phosphate. It carries out the reaction a monoacyl-sn-glycero-3-phosphate + H2O = a monoacylglycerol + phosphate. It catalyses the reaction (9Z)-octadecenoyl-sn-glycero-3-phosphate + H2O = (9Z-octadecenoyl)-glycerol + phosphate. The catalysed reaction is a 1-acyl-sn-glycero-3-phosphate + H2O = a 1-acyl-sn-glycerol + phosphate. The enzyme catalyses 1-(9Z-octadecenoyl)-sn-glycero-3-phosphate + H2O = 1-(9Z-octadecenoyl)-sn-glycerol + phosphate. It carries out the reaction a 1,2-diacyl-sn-glycerol 3-diphosphate + H2O = a 1,2-diacyl-sn-glycero-3-phosphate + phosphate + H(+). It catalyses the reaction sphing-4-enine 1-phosphate + H2O = sphing-4-enine + phosphate. The catalysed reaction is an N-acylsphing-4-enine 1-phosphate + H2O = an N-acylsphing-4-enine + phosphate. The enzyme catalyses N-(octanoyl)-sphing-4-enine-1-phosphate + H2O = N-octanoylsphing-4-enine + phosphate. It carries out the reaction N-(9Z-octadecenoyl)-ethanolamine phosphate + H2O = N-(9Z-octadecenoyl) ethanolamine + phosphate. It catalyses the reaction 1-hexadecanoyl-2-(9Z-octadecenoyl)-sn-glycero-3-phosphate + H2O = 1-hexadecanoyl-2-(9Z-octadecenoyl)-sn-glycerol + phosphate. It participates in lipid metabolism; phospholipid metabolism. Its activity is regulated as follows. Magnesium-independent phospholipid phosphatase. Insensitive to N-ethylmaleimide. In terms of biological role, magnesium-independent phospholipid phosphatase of the plasma membrane that catalyzes the dephosphorylation of a variety of glycerolipid and sphingolipid phosphate esters including phosphatidate/PA, lysophosphatidate/LPA, diacylglycerol pyrophosphate/DGPP, sphingosine 1-phosphate/S1P and ceramide 1-phosphate/C1P. Also acts on N-oleoyl ethanolamine phosphate/N-(9Z-octadecenoyl)-ethanolamine phosphate, a potential physiological compound. Through its extracellular phosphatase activity allows both the hydrolysis and the cellular uptake of these bioactive lipid mediators from the milieu, regulating signal transduction in different cellular processes. It is for instance essential for the extracellular hydrolysis of S1P and subsequent conversion into intracellular S1P. Involved in the regulation of inflammation, platelets activation, cell proliferation and migration among other processes. May also have an intracellular activity to regulate phospholipid-mediated signaling pathways. The polypeptide is Phospholipid phosphatase 1 (Rattus norvegicus (Rat)).